The chain runs to 339 residues: Dihydroorotate dehydrogenase (quinone) (339 aa).

FMN-binding positions include 61–65 (AGLDK) and T85. A substrate-binding site is contributed by K65. Position 110–114 (110–114 (NRMGF)) interacts with substrate. FMN-binding residues include N138 and N171. N171 is a substrate binding site. Residue S174 is the Nucleophile of the active site. N176 is a binding site for substrate. Residues K216 and T244 each contribute to the FMN site. 245–246 (NT) is a substrate binding site. FMN contacts are provided by residues G267, G296, and 317–318 (YS).

Belongs to the dihydroorotate dehydrogenase family. Type 2 subfamily. Monomer. The cofactor is FMN.

It is found in the cell membrane. It catalyses the reaction (S)-dihydroorotate + a quinone = orotate + a quinol. It participates in pyrimidine metabolism; UMP biosynthesis via de novo pathway; orotate from (S)-dihydroorotate (quinone route): step 1/1. Catalyzes the conversion of dihydroorotate to orotate with quinone as electron acceptor. In Pseudomonas fluorescens (strain Pf0-1), this protein is Dihydroorotate dehydrogenase (quinone).